The chain runs to 336 residues: Holliday junction branch migration complex subunit RuvB (336 aa).

A large ATPase domain (RuvB-L) region spans residues 4 to 184; it reads ADRLISAGAT…FGIVQRLEFY (181 aa). Residues isoleucine 23, arginine 24, glycine 65, lysine 68, threonine 69, threonine 70, 131–133, arginine 174, tyrosine 184, and arginine 221 contribute to the ATP site; that span reads EDY. Threonine 69 provides a ligand contact to Mg(2+). The interval 185–255 is small ATPAse domain (RuvB-S); that stretch reads QVPDLQHIVG…IAAQALDMLN (71 aa). A head domain (RuvB-H) region spans residues 258 to 336; the sequence is AEGFDYMDRK…HFGITPPEMP (79 aa). The DNA site is built by arginine 294, arginine 313, and arginine 318.

Belongs to the RuvB family. Homohexamer. Forms an RuvA(8)-RuvB(12)-Holliday junction (HJ) complex. HJ DNA is sandwiched between 2 RuvA tetramers; dsDNA enters through RuvA and exits via RuvB. An RuvB hexamer assembles on each DNA strand where it exits the tetramer. Each RuvB hexamer is contacted by two RuvA subunits (via domain III) on 2 adjacent RuvB subunits; this complex drives branch migration. In the full resolvosome a probable DNA-RuvA(4)-RuvB(12)-RuvC(2) complex forms which resolves the HJ.

It localises to the cytoplasm. It catalyses the reaction ATP + H2O = ADP + phosphate + H(+). Its function is as follows. The RuvA-RuvB-RuvC complex processes Holliday junction (HJ) DNA during genetic recombination and DNA repair, while the RuvA-RuvB complex plays an important role in the rescue of blocked DNA replication forks via replication fork reversal (RFR). RuvA specifically binds to HJ cruciform DNA, conferring on it an open structure. The RuvB hexamer acts as an ATP-dependent pump, pulling dsDNA into and through the RuvAB complex. RuvB forms 2 homohexamers on either side of HJ DNA bound by 1 or 2 RuvA tetramers; 4 subunits per hexamer contact DNA at a time. Coordinated motions by a converter formed by DNA-disengaged RuvB subunits stimulates ATP hydrolysis and nucleotide exchange. Immobilization of the converter enables RuvB to convert the ATP-contained energy into a lever motion, pulling 2 nucleotides of DNA out of the RuvA tetramer per ATP hydrolyzed, thus driving DNA branch migration. The RuvB motors rotate together with the DNA substrate, which together with the progressing nucleotide cycle form the mechanistic basis for DNA recombination by continuous HJ branch migration. Branch migration allows RuvC to scan DNA until it finds its consensus sequence, where it cleaves and resolves cruciform DNA. This chain is Holliday junction branch migration complex subunit RuvB, found in Salmonella choleraesuis (strain SC-B67).